Reading from the N-terminus, the 538-residue chain is Cytochrome P450 monooxygenase cfoH (538 aa).

Residues 24–44 (VLTFFAILLVAILLWYMIPYF) traverse the membrane as a helical segment. Heme is bound at residue Cys471.

It belongs to the cytochrome P450 family. The cofactor is heme.

The protein localises to the membrane. Its pathway is secondary metabolite biosynthesis; flavonoid biosynthesis. Its function is as follows. Cytochrome P450 monooxygenase; part of the gene cluster that mediates the biosynthesis of chlorflavonin, a fungal flavonoid with acetolactate synthase inhibitory activity. Within the pathway, cfoH is responsible for the hydroxylation of the flavonoid skeleton at position C2'. The pathway begins with the PKS-NRPS hybrid synthetase cfoA that uses benzoic acid or p-hydroxybenzoic acid as a starter unit with four rounds of chain elongation using malonyl-CoA to form the chalcone skeleton. Then, a new type of chalcone isomerase, cfoK, catalyzes the conversion of the chalcone into a flavanone by a histidine-mediated oxa-Michael addition mechanism. The desaturation of flavanone to flavone is catalyzed by a new type of flavone synthase, the flavin mononucleotide (FMN)-dependent oxidoreductase cfoJ. Monooxygenases cfoF, cfoG, and P450 cfoH are responsible for the hydroxylation of the flavonoid skeleton at sites C3, C8, and C2', respectively. Like cfoF, the dehydratase cfoI plays also a role in the hydroxylation of position C3. Methyltransferases cfoB, cfoC, and cfoD then catalyze the methylation of C7-OH, C8-OH, and C3-OH, respectively. Finally, the monooxygenase cfoE is responsible for the chlorination of flavonoid at position C3'. The chain is Cytochrome P450 monooxygenase cfoH from Aspergillus candidus.